A 446-amino-acid polypeptide reads, in one-letter code: Phosphoglucosamine mutase (446 aa).

Ser-101 serves as the catalytic Phosphoserine intermediate. Mg(2+)-binding residues include Ser-101, Asp-240, Asp-242, and Asp-244. Ser-101 carries the post-translational modification Phosphoserine.

Belongs to the phosphohexose mutase family. It depends on Mg(2+) as a cofactor. Post-translationally, activated by phosphorylation.

The catalysed reaction is alpha-D-glucosamine 1-phosphate = D-glucosamine 6-phosphate. Functionally, catalyzes the conversion of glucosamine-6-phosphate to glucosamine-1-phosphate. This is Phosphoglucosamine mutase from Pseudomonas entomophila (strain L48).